The sequence spans 303 residues: Putative ring-cleaving dioxygenase MhqE (303 aa).

2 consecutive VOC domains span residues 5–129 and 150–266; these read GLHH…IMED and GMKG…IATD. 3 residues coordinate Fe cation: His8, His215, and Glu262.

This sequence belongs to the extradiol ring-cleavage dioxygenase family. The cofactor is Fe(2+).

It is found in the cytoplasm. Functionally, putative ring-cleavage dioxygenase that may contribute to the degradation of aromatic compounds. The polypeptide is Putative ring-cleaving dioxygenase MhqE (mhqE) (Bacillus subtilis (strain 168)).